A 200-amino-acid polypeptide reads, in one-letter code: MAHVLPDLPYAYDALEPYISRQIMELHHKKTSSDLCECAQHCRGCLRHSTAVVGGFDLSLFFILTTLGHINHSLFWQNLAPAAGAGGQLKPGPLKDAIDQTFGGLDNLKKEFNTTTAGIQGSGWGWLGVNPSNKRLEISTTPNQDPLLNLVPIIGVDIWEHAFYLQYLNVKADYLNAIWSVINFDEAQRRYVEATQGSKL.

Residues H27, H72, D157, and H161 each contribute to the Mn(2+) site.

This sequence belongs to the iron/manganese superoxide dismutase family. The cofactor is Mn(2+).

It localises to the mitochondrion matrix. The catalysed reaction is 2 superoxide + 2 H(+) = H2O2 + O2. Destroys superoxide anion radicals which are normally produced within the cells and which are toxic to biological systems. This chain is Superoxide dismutase [Mn], mitochondrial (sod), found in Agaricus bisporus (White button mushroom).